A 208-amino-acid polypeptide reads, in one-letter code: Large ribosomal subunit protein uL4 (208 aa).

Residues Arg-45–Gly-85 form a disordered region. Positions Gln-46–Arg-66 are enriched in basic residues. The segment covering Gly-69–Ser-80 has biased composition (polar residues).

The protein belongs to the universal ribosomal protein uL4 family. Part of the 50S ribosomal subunit.

Its function is as follows. One of the primary rRNA binding proteins, this protein initially binds near the 5'-end of the 23S rRNA. It is important during the early stages of 50S assembly. It makes multiple contacts with different domains of the 23S rRNA in the assembled 50S subunit and ribosome. In terms of biological role, forms part of the polypeptide exit tunnel. This is Large ribosomal subunit protein uL4 from Chlorobium phaeobacteroides (strain DSM 266 / SMG 266 / 2430).